The chain runs to 369 residues: Omega-amidase, chloroplastic (369 aa).

Residues 1 to 63 constitute a chloroplast transit peptide; the sequence is MKSAISSSLF…SALRSISSSM (63 aa). The residue at position 64 (A64) is an N-acetylalanine. The region spanning 88–337 is the CN hydrolase domain; the sequence is FNIGLCQLSV…EAIIIAEIDY (250 aa). E127 acts as the Proton acceptor in catalysis. K201 (proton donor) is an active-site residue. The active-site Nucleophile is the C242.

It belongs to the nitrilase superfamily. NIT1/NIT2 family.

The protein localises to the plastid. Its subcellular location is the chloroplast. The enzyme catalyses a monoamide of a dicarboxylate + H2O = a dicarboxylate + NH4(+). In terms of biological role, omega-amidase involved in the metabolism of asparagine. Probably also closely coupled with glutamine transamination in the methionine salvage cycle. Can use alpha-ketosuccinamate and alpha-hydroxysuccinamate as substrates, producing respectively oxaloacetate and malate, or alpha-ketoglutaramate, producing alpha-ketoglutarate. This is Omega-amidase, chloroplastic from Arabidopsis thaliana (Mouse-ear cress).